Reading from the N-terminus, the 270-residue chain is Ribosomal RNA small subunit methyltransferase A (270 aa).

S-adenosyl-L-methionine-binding residues include asparagine 16, leucine 18, glycine 43, glutamate 64, aspartate 89, and asparagine 110.

This sequence belongs to the class I-like SAM-binding methyltransferase superfamily. rRNA adenine N(6)-methyltransferase family. RsmA subfamily.

The protein resides in the cytoplasm. It carries out the reaction adenosine(1518)/adenosine(1519) in 16S rRNA + 4 S-adenosyl-L-methionine = N(6)-dimethyladenosine(1518)/N(6)-dimethyladenosine(1519) in 16S rRNA + 4 S-adenosyl-L-homocysteine + 4 H(+). Specifically dimethylates two adjacent adenosines (A1518 and A1519) in the loop of a conserved hairpin near the 3'-end of 16S rRNA in the 30S particle. May play a critical role in biogenesis of 30S subunits. The protein is Ribosomal RNA small subunit methyltransferase A of Pseudomonas fluorescens (strain ATCC BAA-477 / NRRL B-23932 / Pf-5).